Reading from the N-terminus, the 251-residue chain is CDP-diacylglycerol pyrophosphatase (251 aa).

A helical membrane pass occupies residues 5–25 (GYFLLAVIVIVAAAGVGYWKF).

This sequence belongs to the Cdh family.

It localises to the cell inner membrane. The enzyme catalyses a CDP-1,2-diacyl-sn-glycerol + H2O = a 1,2-diacyl-sn-glycero-3-phosphate + CMP + 2 H(+). It participates in phospholipid metabolism; CDP-diacylglycerol degradation; phosphatidate from CDP-diacylglycerol: step 1/1. This Salmonella paratyphi A (strain ATCC 9150 / SARB42) protein is CDP-diacylglycerol pyrophosphatase.